We begin with the raw amino-acid sequence, 306 residues long: Putative syntaxin-3 (306 aa).

Over 1–279 (MPRDRLKELQ…QKRARKMKVC (279 aa)) the chain is Cytoplasmic. Residues 40-180 (QDADFEMFLE…QLSDEEIENA (141 aa)) are required for the regulation of the defecation motor program. Positions 204-266 (YDEVKSRADE…KQARGNVEEA (63 aa)) constitute a t-SNARE coiled-coil homology domain. A helical; Anchor for type IV membrane protein transmembrane segment spans residues 280-300 (IIIGSIIAVLILILFIQSAVC). Over 301-306 (HFTPIC) the chain is Extracellular.

The protein belongs to the syntaxin family. In terms of tissue distribution, expressed in body wall, pharyngeal, vulval and enteric muscles and in some head neurons.

It is found in the cell membrane. Its function is as follows. Potentially involved in docking of synaptic vesicles at presynaptic active zones. Acts in the intestine to regulate anterior body muscle contractions (aBOC) and the expulsion steps during the defecation motor program (DMP). The sequence is that of Putative syntaxin-3 from Caenorhabditis elegans.